A 498-amino-acid chain; its full sequence is E3 ubiquitin-protein ligase TRIM22 (498 aa).

The RING-type zinc finger occupies 15–60 (CPICLELLTEPLSLDCGHSFCQACITAKIKESVIISRGESSCPVCQ). Residues 92-133 (QKRDVCEHHGKKLQIFCKEDGKVICWVCELSQEHQGHQTFRI) form a B box-type zinc finger. Zn(2+)-binding residues include Cys97, His100, Cys119, and His125. Residues 132–248 (RINEVVKECQ…RRLRGSSVEM (117 aa)) are a coiled coil. The Nuclear localization signal motif lies at 257-275 (KRSESWTLKKPKSVSKKLK). One can recognise a B30.2/SPRY domain in the interval 283–498 (LSGMLQVLKE…VPMTVCPPSS (216 aa)).

The protein belongs to the TRIM/RBCC family. As to quaternary structure, homotrimer. (Microbial infection) Interacts with HIV-1 Gag polyprotein; this interaction seems to reduce gag production or virus budding. In terms of assembly, (Microbial infection) Interacts with EMCV protease 3C; this interaction leads to viral protease ubiquitination. In terms of processing, auto-ubiquitinated. In terms of tissue distribution, strongly expressed in peripheral blood leukocytes, spleen, thymus, and ovary. Expressed at basal levels in other tissues.

The protein resides in the cytoplasm. It is found in the nucleus. The protein localises to the nucleus speckle. Its subcellular location is the cajal body. The enzyme catalyses S-ubiquitinyl-[E2 ubiquitin-conjugating enzyme]-L-cysteine + [acceptor protein]-L-lysine = [E2 ubiquitin-conjugating enzyme]-L-cysteine + N(6)-ubiquitinyl-[acceptor protein]-L-lysine.. It functions in the pathway protein modification; protein ubiquitination. Interferon-induced E3 ubiquitin ligase that plays important roles in innate and adaptive immunity. Restricts the replication of many viruses including HIV-1, encephalomyocarditis virus (EMCV), hepatitis B virus (HBV), hepatitis C virus (HCV) or Zika virus (ZIKV). Mechanistically, negatively regulates HCV replication by promoting ubiquitination and subsequent degradation of viral NS5A. Also acts by promoting the degradation of Zika virus NS1 and NS3 proteins through proteasomal degradation. Acts as a suppressor of basal HIV-1 LTR-driven transcription by preventing Sp1 binding to the HIV-1 promoter. Also plays a role in antiviral immunity by co-regulating together with NT5C2 the RIGI/NF-kappa-B pathway by promoting 'Lys-63'-linked ubiquitination of RIGI, while NT5C2 is responsible for 'Lys-48'-linked ubiquitination of RIGI. Participates in adaptive immunity by suppressing the amount of MHC class II protein in a negative feedback manner in order to limit the extent of MHC class II induction. This chain is E3 ubiquitin-protein ligase TRIM22 (TRIM22), found in Homo sapiens (Human).